The primary structure comprises 339 residues: UDP-N-acetylglucosamine--N-acetylmuramyl-(pentapeptide) pyrophosphoryl-undecaprenol N-acetylglucosamine transferase (339 aa).

UDP-N-acetyl-alpha-D-glucosamine contacts are provided by residues 9-11 (TGG), asparagine 119, arginine 160, serine 188, and glutamine 280.

Belongs to the glycosyltransferase 28 family. MurG subfamily.

It is found in the cell inner membrane. The catalysed reaction is di-trans,octa-cis-undecaprenyl diphospho-N-acetyl-alpha-D-muramoyl-L-alanyl-D-glutamyl-meso-2,6-diaminopimeloyl-D-alanyl-D-alanine + UDP-N-acetyl-alpha-D-glucosamine = di-trans,octa-cis-undecaprenyl diphospho-[N-acetyl-alpha-D-glucosaminyl-(1-&gt;4)]-N-acetyl-alpha-D-muramoyl-L-alanyl-D-glutamyl-meso-2,6-diaminopimeloyl-D-alanyl-D-alanine + UDP + H(+). It functions in the pathway cell wall biogenesis; peptidoglycan biosynthesis. Its function is as follows. Cell wall formation. Catalyzes the transfer of a GlcNAc subunit on undecaprenyl-pyrophosphoryl-MurNAc-pentapeptide (lipid intermediate I) to form undecaprenyl-pyrophosphoryl-MurNAc-(pentapeptide)GlcNAc (lipid intermediate II). This is UDP-N-acetylglucosamine--N-acetylmuramyl-(pentapeptide) pyrophosphoryl-undecaprenol N-acetylglucosamine transferase from Thermus thermophilus (strain ATCC BAA-163 / DSM 7039 / HB27).